Here is a 423-residue protein sequence, read N- to C-terminus: Lysosomal acid phosphatase (423 aa).

An N-terminal signal peptide occupies residues 1–30 (MAGKRSGWSRAALLQLLLGVNLVVMPPTRA). The Lumenal segment spans residues 31 to 380 (RSLRFVTLLY…QLASGPADTE (350 aa)). The Nucleophile role is filled by His-42. Asn-92, Asn-133, Asn-167, Asn-177, Asn-191, and Asn-267 each carry an N-linked (GlcNAc...) asparagine glycan. Intrachain disulfides connect Cys-159/Cys-370, Cys-212/Cys-310, and Cys-345/Cys-349. Catalysis depends on Asp-287, which acts as the Proton donor. 2 N-linked (GlcNAc...) asparagine glycosylation sites follow: Asn-322 and Asn-331. Residues 381-401 (VIVALAVCGSILFLLIVLLLT) form a helical membrane-spanning segment. The Cytoplasmic portion of the chain corresponds to 402 to 423 (VLFRMQAQPPGYRHVADGEDHA).

Belongs to the histidine acid phosphatase family. The membrane-bound form is converted to the soluble form by sequential proteolytic processing. First, the C-terminal cytoplasmic tail is removed. Cleavage by a lysosomal protease releases the soluble form in the lysosome lumen. In terms of processing, N-glycosylated. The intermediates formed during enzymatic deglycosylation suggest that all eight predicted N-glycosylation sites are used.

The protein localises to the lysosome membrane. It is found in the lysosome lumen. It catalyses the reaction a phosphate monoester + H2O = an alcohol + phosphate. In Homo sapiens (Human), this protein is Lysosomal acid phosphatase (ACP2).